Consider the following 269-residue polypeptide: Protein OPG079 (269 aa).

This sequence belongs to the orthopoxvirus OPG079 family. As to quaternary structure, homoomultimer (Potential). Interacts with the small subunit of ribonucleotide reductase.

It localises to the host cytoplasm. Plays an essential role in viral DNA replication. Binds to ssDNA with high affinity and localizes to cytoplasmic factories where nascent viral genomes accumulate. May disrupt loops, hairpins and other secondary structures present on ssDNA to reduce and eliminate pausing of viral DNA polymerase at specific sites during elongation. In Cynomys gunnisoni (Gunnison's prairie dog), this protein is Protein OPG079 (OPG079).